Reading from the N-terminus, the 105-residue chain is Large ribosomal subunit protein uL23 (105 aa).

Belongs to the universal ribosomal protein uL23 family. As to quaternary structure, part of the 50S ribosomal subunit. Contacts protein L29, and trigger factor when it is bound to the ribosome.

In terms of biological role, one of the early assembly proteins it binds 23S rRNA. One of the proteins that surrounds the polypeptide exit tunnel on the outside of the ribosome. Forms the main docking site for trigger factor binding to the ribosome. This Ureaplasma urealyticum serovar 10 (strain ATCC 33699 / Western) protein is Large ribosomal subunit protein uL23.